The primary structure comprises 226 residues: PKHD-type hydroxylase AZC_3753 (226 aa).

One can recognise a Fe2OG dioxygenase domain in the interval 78 to 178 (RILPPMFNRY…RVASFFWTQS (101 aa)). Fe cation is bound by residues His96, Asp98, and His159. Position 169 (Arg169) interacts with 2-oxoglutarate.

It depends on Fe(2+) as a cofactor. L-ascorbate serves as cofactor.

The chain is PKHD-type hydroxylase AZC_3753 from Azorhizobium caulinodans (strain ATCC 43989 / DSM 5975 / JCM 20966 / LMG 6465 / NBRC 14845 / NCIMB 13405 / ORS 571).